We begin with the raw amino-acid sequence, 495 residues long: Glucose-6-phosphate 1-dehydrogenase (495 aa).

An Isoglutamyl lysine isopeptide (Lys-Gln) (interchain with Q-Cter in protein Pup) cross-link involves residue Lys51. Residues 94–95 (DL) and Lys154 contribute to the NADP(+) site. Substrate-binding residues include His184, Lys188, Glu222, and Asp241. His246 (proton acceptor) is an active-site residue. Lys345 is a binding site for substrate.

The protein belongs to the glucose-6-phosphate dehydrogenase family.

The enzyme catalyses D-glucose 6-phosphate + NADP(+) = 6-phospho-D-glucono-1,5-lactone + NADPH + H(+). It functions in the pathway carbohydrate degradation; pentose phosphate pathway; D-ribulose 5-phosphate from D-glucose 6-phosphate (oxidative stage): step 1/3. Functionally, catalyzes the oxidation of glucose 6-phosphate to 6-phosphogluconolactone. The sequence is that of Glucose-6-phosphate 1-dehydrogenase from Mycolicibacterium smegmatis (strain ATCC 700084 / mc(2)155) (Mycobacterium smegmatis).